Reading from the N-terminus, the 82-residue chain is ATP synthase subunit c, chloroplastic (82 aa).

2 helical membrane passes run 7 to 27 (AASV…PGIG) and 57 to 77 (LAFM…LLFA).

It belongs to the ATPase C chain family. F-type ATPases have 2 components, F(1) - the catalytic core - and F(0) - the membrane proton channel. F(1) has five subunits: alpha(3), beta(3), gamma(1), delta(1), epsilon(1). F(0) has four main subunits: a(1), b(1), b'(1) and c(10-14). The alpha and beta chains form an alternating ring which encloses part of the gamma chain. F(1) is attached to F(0) by a central stalk formed by the gamma and epsilon chains, while a peripheral stalk is formed by the delta, b and b' chains.

The protein localises to the plastid. It is found in the chloroplast thylakoid membrane. F(1)F(0) ATP synthase produces ATP from ADP in the presence of a proton or sodium gradient. F-type ATPases consist of two structural domains, F(1) containing the extramembraneous catalytic core and F(0) containing the membrane proton channel, linked together by a central stalk and a peripheral stalk. During catalysis, ATP synthesis in the catalytic domain of F(1) is coupled via a rotary mechanism of the central stalk subunits to proton translocation. Functionally, key component of the F(0) channel; it plays a direct role in translocation across the membrane. A homomeric c-ring of between 10-14 subunits forms the central stalk rotor element with the F(1) delta and epsilon subunits. The protein is ATP synthase subunit c, chloroplastic of Rhodomonas salina (Cryptomonas salina).